We begin with the raw amino-acid sequence, 112 residues long: Cell cycle protein GpsB (112 aa).

Positions 42–77 (YQKMADMNNEVVKLSEENNKLKKEVEELRLRVATSR) form a coiled coil. The disordered stretch occupies residues 75-97 (TSRPSDNKSFSSNNSSSSNNNVD). Over residues 81–95 (NKSFSSNNSSSSNNN) the composition is skewed to low complexity.

It belongs to the GpsB family. Forms polymers through the coiled coil domains. Interacts with PBP1, MreC and EzrA.

It localises to the cytoplasm. In terms of biological role, divisome component that associates with the complex late in its assembly, after the Z-ring is formed, and is dependent on DivIC and PBP2B for its recruitment to the divisome. Together with EzrA, is a key component of the system that regulates PBP1 localization during cell cycle progression. Its main role could be the removal of PBP1 from the cell pole after pole maturation is completed. Also contributes to the recruitment of PBP1 to the division complex. Not essential for septum formation. In Staphylococcus haemolyticus (strain JCSC1435), this protein is Cell cycle protein GpsB.